The primary structure comprises 391 residues: Phosphoglycerate kinase (391 aa).

Residues 21-23, Arg36, 59-62, Arg113, and Arg146 each bind substrate; these read DLN and HLGR. ATP contacts are provided by residues Lys197, Glu319, and 345–348; that span reads GGDT.

Belongs to the phosphoglycerate kinase family. Monomer.

It is found in the cytoplasm. The enzyme catalyses (2R)-3-phosphoglycerate + ATP = (2R)-3-phospho-glyceroyl phosphate + ADP. It functions in the pathway carbohydrate degradation; glycolysis; pyruvate from D-glyceraldehyde 3-phosphate: step 2/5. This Shewanella denitrificans (strain OS217 / ATCC BAA-1090 / DSM 15013) protein is Phosphoglycerate kinase.